We begin with the raw amino-acid sequence, 60 residues long: Large ribosomal subunit protein bL32 (60 aa).

Positions 1–47 (MAVQQNRKTRSKRGMRRSHDALTSSTLSTDPTTGEKHRRHHVTADGF) are disordered. Residues 7-16 (RKTRSKRGMR) show a composition bias toward basic residues.

Belongs to the bacterial ribosomal protein bL32 family.

In Teredinibacter turnerae (strain ATCC 39867 / T7901), this protein is Large ribosomal subunit protein bL32.